Consider the following 436-residue polypeptide: Hydrogenobyrinate a,c-diamide synthase (436 aa).

The GATase cobBQ-type domain maps to 244-435 (RIAVARDDAF…MHVIDFSGEA (192 aa)). Cys-327 (nucleophile) is an active-site residue.

The protein belongs to the CobB/CbiA family. Mg(2+) is required as a cofactor.

The enzyme catalyses hydrogenobyrinate + 2 L-glutamine + 2 ATP + 2 H2O = hydrogenobyrinate a,c-diamide + 2 L-glutamate + 2 ADP + 2 phosphate + 2 H(+). The protein operates within cofactor biosynthesis; adenosylcobalamin biosynthesis; cob(II)yrinate a,c-diamide from precorrin-2 (aerobic route): step 9/10. In terms of biological role, catalyzes the ATP-dependent amidation of the two carboxylate groups at positions a and c of hydrogenobyrinate, using either L-glutamine or ammonia as the nitrogen source. The chain is Hydrogenobyrinate a,c-diamide synthase from Brucella ovis (strain ATCC 25840 / 63/290 / NCTC 10512).